Consider the following 69-residue polypeptide: Conotoxin Eb6.22 (69 aa).

Positions V1–A17 are cleaved as a signal peptide. Residues E18–R41 constitute a propeptide that is removed on maturation. 3 disulfide bridges follow: C43/C57, C50/C61, and C56/C68.

The protein belongs to the conotoxin O1 superfamily. Expressed by the venom duct.

It localises to the secreted. The polypeptide is Conotoxin Eb6.22 (E1) (Conus ebraeus (Hebrew cone)).